The primary structure comprises 90 residues: Cyclin-dependent kinases regulatory subunit 1 (90 aa).

This sequence belongs to the CKS family.

Functionally, binds to the catalytic subunit of the cyclin dependent kinases and is essential for their biological function. The chain is Cyclin-dependent kinases regulatory subunit 1 (CKS1) from Oryza sativa subsp. indica (Rice).